A 216-amino-acid polypeptide reads, in one-letter code: Somatotropin (216 aa).

An N-terminal signal peptide occupies residues 1–26 (MAAGPRTSVLLAFALLCLPWTQEVGA). His-45 contributes to the Zn(2+) binding site. Cysteines 78 and 189 form a disulfide. Ser-131 carries the post-translational modification Phosphoserine. Glu-198 contacts Zn(2+). Residues Cys-206 and Cys-214 are joined by a disulfide bond.

It belongs to the somatotropin/prolactin family.

It is found in the secreted. Its function is as follows. Plays an important role in growth control. Its major role in stimulating body growth is to stimulate the liver and other tissues to secrete IGF1. It stimulates both the differentiation and proliferation of myoblasts. It also stimulates amino acid uptake and protein synthesis in muscle and other tissues. The polypeptide is Somatotropin (GH1) (Hippopotamus amphibius (Hippopotamus)).